The primary structure comprises 49 residues: Large ribosomal subunit protein bL32 (49 aa).

The disordered stretch occupies residues 25–49; the sequence is AKPVKDKDGTYKLPHHINPTTGEYK.

This sequence belongs to the bacterial ribosomal protein bL32 family.

This Sulfurimonas denitrificans (strain ATCC 33889 / DSM 1251) (Thiomicrospira denitrificans (strain ATCC 33889 / DSM 1251)) protein is Large ribosomal subunit protein bL32.